Here is a 192-residue protein sequence, read N- to C-terminus: Pyridoxal 5'-phosphate synthase subunit PdxT (192 aa).

50 to 52 lines the L-glutamine pocket; that stretch reads GES. Cys82 acts as the Nucleophile in catalysis. L-glutamine contacts are provided by residues Arg109 and 136 to 137; that span reads IR. Catalysis depends on charge relay system residues His172 and Glu174.

The protein belongs to the glutaminase PdxT/SNO family. In the presence of PdxS, forms a dodecamer of heterodimers. Only shows activity in the heterodimer.

It catalyses the reaction aldehydo-D-ribose 5-phosphate + D-glyceraldehyde 3-phosphate + L-glutamine = pyridoxal 5'-phosphate + L-glutamate + phosphate + 3 H2O + H(+). The enzyme catalyses L-glutamine + H2O = L-glutamate + NH4(+). The protein operates within cofactor biosynthesis; pyridoxal 5'-phosphate biosynthesis. Catalyzes the hydrolysis of glutamine to glutamate and ammonia as part of the biosynthesis of pyridoxal 5'-phosphate. The resulting ammonia molecule is channeled to the active site of PdxS. The sequence is that of Pyridoxal 5'-phosphate synthase subunit PdxT from Haemophilus influenzae (strain PittGG).